We begin with the raw amino-acid sequence, 270 residues long: 3-methyl-2-oxobutanoate hydroxymethyltransferase (270 aa).

2 residues coordinate Mg(2+): D43 and D82. 3-methyl-2-oxobutanoate is bound by residues D43–S44, D82, and K110. Residue E112 participates in Mg(2+) binding. Catalysis depends on E179, which acts as the Proton acceptor.

It belongs to the PanB family. As to quaternary structure, homodecamer; pentamer of dimers. The cofactor is Mg(2+).

It is found in the cytoplasm. The catalysed reaction is 3-methyl-2-oxobutanoate + (6R)-5,10-methylene-5,6,7,8-tetrahydrofolate + H2O = 2-dehydropantoate + (6S)-5,6,7,8-tetrahydrofolate. The protein operates within cofactor biosynthesis; (R)-pantothenate biosynthesis; (R)-pantoate from 3-methyl-2-oxobutanoate: step 1/2. Functionally, catalyzes the reversible reaction in which hydroxymethyl group from 5,10-methylenetetrahydrofolate is transferred onto alpha-ketoisovalerate to form ketopantoate. The chain is 3-methyl-2-oxobutanoate hydroxymethyltransferase from Psychrobacter sp. (strain PRwf-1).